The chain runs to 285 residues: Polyamine aminopropyltransferase (285 aa).

The PABS domain occupies 5–241; that stretch reads DNWYIEHFQP…GWWSVTMASK (237 aa). S-methyl-5'-thioadenosine is bound at residue Gln-35. Positions 66 and 90 each coordinate spermidine. S-methyl-5'-thioadenosine is bound by residues Asp-110 and 141 to 142; that span reads DG. Asp-160 (proton acceptor) is an active-site residue. Residue 160 to 163 coordinates spermidine; it reads DSTD. Pro-167 provides a ligand contact to S-methyl-5'-thioadenosine.

This sequence belongs to the spermidine/spermine synthase family. As to quaternary structure, homodimer or homotetramer.

Its subcellular location is the cytoplasm. The catalysed reaction is S-adenosyl 3-(methylsulfanyl)propylamine + putrescine = S-methyl-5'-thioadenosine + spermidine + H(+). The protein operates within amine and polyamine biosynthesis; spermidine biosynthesis; spermidine from putrescine: step 1/1. Functionally, catalyzes the irreversible transfer of a propylamine group from the amino donor S-adenosylmethioninamine (decarboxy-AdoMet) to putrescine (1,4-diaminobutane) to yield spermidine. In Xanthomonas euvesicatoria pv. vesicatoria (strain 85-10) (Xanthomonas campestris pv. vesicatoria), this protein is Polyamine aminopropyltransferase.